The primary structure comprises 1323 residues: DNA-directed RNA polymerase subunit beta' (1323 aa).

Residues Cys60, Cys62, Cys75, and Cys78 each contribute to the Zn(2+) site. Positions 535, 537, and 539 each coordinate Mg(2+). Residues Cys894, Cys977, Cys984, and Cys987 each contribute to the Zn(2+) site.

Belongs to the RNA polymerase beta' chain family. As to quaternary structure, the RNAP catalytic core consists of 2 alpha, 1 beta, 1 beta' and 1 omega subunit. When a sigma factor is associated with the core the holoenzyme is formed, which can initiate transcription. It depends on Mg(2+) as a cofactor. Zn(2+) is required as a cofactor.

The catalysed reaction is RNA(n) + a ribonucleoside 5'-triphosphate = RNA(n+1) + diphosphate. In terms of biological role, DNA-dependent RNA polymerase catalyzes the transcription of DNA into RNA using the four ribonucleoside triphosphates as substrates. The protein is DNA-directed RNA polymerase subunit beta' of Corynebacterium urealyticum (strain ATCC 43042 / DSM 7109).